The following is a 78-amino-acid chain: Delta-conotoxin TxVIA (78 aa).

The first 22 residues, 1-22 (MKLTCMMIVAVLFLTAWTFATA), serve as a signal peptide directing secretion. Positions 23–49 (DDPRNGLGNLFSNAHHEMKNPEASKLN) are excised as a propeptide. 3 disulfides stabilise this stretch: C53–C68, C60–C72, and C67–C77. M59 bears the Methionine sulfoxide; partial mark.

The protein belongs to the conotoxin O1 superfamily. As to expression, expressed by the venom duct.

It localises to the secreted. Delta-conotoxins bind to site 6 of voltage-gated sodium channels (Nav) and inhibit the inactivation process. Binding of this toxin is strongly calcium-dependent but not voltage-dependent. The binding site is most likely on the extracellular side of the sodium channel. Binds receptor sites on both mollusk and rat central nervous system, but despite its high affinity binding to rat sodium channel, it has no functional effect in vivo and in vitro on it. Also has no effect on Gambusia fish. Is important in mollusk for the paralysis of the prey. Upon injection of the peptide, a subordinate lobster assumes an exaggerated dominant posture (of a 'King-Kong' lobster!). This chain is Delta-conotoxin TxVIA, found in Conus textile (Cloth-of-gold cone).